The following is a 346-amino-acid chain: D-alanine--D-alanine ligase A (346 aa).

In terms of domain architecture, ATP-grasp spans 138–332; that stretch reads KRLFLAAGVE…FAELCERICR (195 aa). Residue 164 to 217 coordinates ATP; it reads QLGFPLVVKPNSQGSTVGLSIVHSQAELQPAIELAGRYGDEVMLERFVAGREVT. Residues D286, E299, and N301 each coordinate Mg(2+).

Belongs to the D-alanine--D-alanine ligase family. The cofactor is Mg(2+). Mn(2+) is required as a cofactor.

It localises to the cytoplasm. The catalysed reaction is 2 D-alanine + ATP = D-alanyl-D-alanine + ADP + phosphate + H(+). It participates in cell wall biogenesis; peptidoglycan biosynthesis. Its function is as follows. Cell wall formation. This chain is D-alanine--D-alanine ligase A, found in Pseudomonas aeruginosa (strain ATCC 15692 / DSM 22644 / CIP 104116 / JCM 14847 / LMG 12228 / 1C / PRS 101 / PAO1).